The sequence spans 494 residues: Aspartyl/glutamyl-tRNA(Asn/Gln) amidotransferase subunit B (494 aa).

The protein belongs to the GatB/GatE family. GatB subfamily. In terms of assembly, heterotrimer of A, B and C subunits.

The enzyme catalyses L-glutamyl-tRNA(Gln) + L-glutamine + ATP + H2O = L-glutaminyl-tRNA(Gln) + L-glutamate + ADP + phosphate + H(+). It carries out the reaction L-aspartyl-tRNA(Asn) + L-glutamine + ATP + H2O = L-asparaginyl-tRNA(Asn) + L-glutamate + ADP + phosphate + 2 H(+). Allows the formation of correctly charged Asn-tRNA(Asn) or Gln-tRNA(Gln) through the transamidation of misacylated Asp-tRNA(Asn) or Glu-tRNA(Gln) in organisms which lack either or both of asparaginyl-tRNA or glutaminyl-tRNA synthetases. The reaction takes place in the presence of glutamine and ATP through an activated phospho-Asp-tRNA(Asn) or phospho-Glu-tRNA(Gln). The protein is Aspartyl/glutamyl-tRNA(Asn/Gln) amidotransferase subunit B of Rhodopseudomonas palustris (strain HaA2).